Consider the following 153-residue polypeptide: MVNEYKAHSSFILKVVITLIGYWIASILAIIIYSMFFKIETNTFLLCLLLPTPIIWFNILIGMGLTYRCMENLTIYDKHKLWCVFVRDLTLTILATILATLTTMELYQIEHPLKPIEFVFIVGLVLIVGFTIITTLIIKYLKIIKNLKKISKN.

Helical transmembrane passes span 17 to 37 (ITLI…SMFF), 44 to 64 (FLLC…IGMG), and 118 to 138 (FVFI…TLII).

The protein to M.jannaschii MJ0129 and MJ0554.

It is found in the cell membrane. This is an uncharacterized protein from Methanocaldococcus jannaschii (strain ATCC 43067 / DSM 2661 / JAL-1 / JCM 10045 / NBRC 100440) (Methanococcus jannaschii).